The chain runs to 23 residues: Phallacidin proprotein (23 aa).

Residue P1 is a propeptide. Residues 2–8 constitute a cross-link (cyclopeptide (Ala-Pro)); that stretch reads AWLVDCP. The 2'-cysteinyl-6'-hydroxytryptophan sulfoxide (Trp-Cys) cross-link spans 3–7; that stretch reads WLVDC. The propeptide occupies 9-23; the sequence is CVGDDVNFILTRGQK.

It belongs to the MSDIN fungal toxin family. In terms of processing, processed by the macrocyclase-peptidase enzyme POPB to yield a toxic cyclic heptapeptide. POPB first removes 10 residues from the N-terminus. Conformational trapping of the remaining peptide forces the enzyme to release this intermediate rather than proceed to macrocyclization. The enzyme rebinds the remaining peptide in a different conformation and catalyzes macrocyclization of the N-terminal 7 residues.

Functionally, major toxin that belongs to the bicyclic heptapeptides called phallotoxins. Although structurally related to amatoxins, phallotoxins have a different mode of action, which is the stabilization of F-actin. Phallotoxins are poisonous when administered parenterally, but not orally because of poor absorption. This chain is Phallacidin proprotein, found in Amanita fuligineoides.